The sequence spans 962 residues: Ubiquitin carboxyl-terminal hydrolase 4 (962 aa).

Positions 11–122 (PDVETQKTEL…GQQPIVRKVV (112 aa)) constitute a DUSP domain. Positions 27-216 (TLQRGAQWYL…LYQGQVLVIE (190 aa)) are necessary for interaction with SART3. Residues 133 to 141 (VEVYLLELK) carry the Nuclear export signal motif. In terms of domain architecture, Ubiquitin-like 1 spans 142–226 (LCENSDPTNV…PQNEDGTWPR (85 aa)). Residues 220–249 (EDGTWPRQSLQSKSSTAPSRNFTTSSKPSA) form a disordered region. The segment covering 225–249 (PRQSLQSKSSTAPSRNFTTSSKPSA) has biased composition (polar residues). Residues 229–295 (LQSKSSTAPS…SYNCQEPPSP (67 aa)) are required for USP4 activation by providing conformational flexibility between the DUSP and catalytic domains. Residues 302–922 (CGLGNLGNTC…AAYVLFYQRR (621 aa)) form the USP domain. Residue Cys-311 is the Nucleophile of the active site. The tract at residues 384-386 (PQF) is regulates ubiquitin dissociation. Positions 405-407 (LHE) are necessary for interaction with RBL2. At Ser-445 the chain carries Phosphoserine. Positions 459–463 (LVCPE) are necessary for interaction with RB1 and RBL2. Residues Cys-461 and Cys-464 each contribute to the Zn(2+) site. One can recognise a Ubiquitin-like 2 domain in the interval 483–571 (LKKDRIMEVF…IFVYEVCNTS (89 aa)). The tract at residues 485–774 (KDRIMEVFLV…SQPQKKKKAA (290 aa)) is interacts with DUSP and ubiquitin-like 1 domains and is required for USP4 activation. Residues 638–699 (EFLSSPLEPG…SESAQKVKGQ (62 aa)) are disordered. Ser-655 carries the post-translational modification Phosphoserine. A compositionally biased stretch (acidic residues) spans 657 to 666 (EGDEEEEMDH). Phosphoserine occurs at positions 675 and 680. Positions 766-771 (QPQKKK) match the Nuclear localization signal motif. The Zn(2+) site is built by Cys-798 and Cys-801. The Proton acceptor role is filled by His-880. Low complexity predominate over residues 928–937 (STSSLGSFPG). Positions 928 to 962 (STSSLGSFPGSDGGVKLSSSHQGMGDEEAYNMDTN) are disordered. Acidic residues predominate over residues 952 to 962 (GDEEAYNMDTN).

It belongs to the peptidase C19 family. USP4 subfamily. In terms of assembly, interacts with RB1 (both dephosphorylated and hypophosphorylated forms). Interacts with RBL1 and RBL2. Interacts with ADORA2A (via cytoplasmic C-terminus); the interaction is direct. Interacts with SART3; recruits USP4 to its substrate PRPF3. Phosphorylated at Ser-445 by PKB/AKT1 in response to EGF stimulus, promoting its ability deubiquitinate RHEB. Post-translationally, monoubiquitinated by TRIM21. Ubiquitination does not lead to its proteasomal degradation. Autodeubiquitinated. Expressed in brain, kidney, liver and spleen (at protein level).

It is found in the cytoplasm. Its subcellular location is the nucleus. The enzyme catalyses Thiol-dependent hydrolysis of ester, thioester, amide, peptide and isopeptide bonds formed by the C-terminal Gly of ubiquitin (a 76-residue protein attached to proteins as an intracellular targeting signal).. With respect to regulation, the completion of the deubiquitinase reaction is mediated by the DUSP and ubiquitin-like 1 domains which promotes the release of ubiquitin from the catalytic site enabling subsequent reactions to occur. Deubiquitinating enzyme that removes conjugated ubiquitin from target proteins. Deubiquitinates PDPK1. Deubiquitinates TRIM21. Deubiquitinates receptor ADORA2A which increases the amount of functional receptor at the cell surface. Deubiquitinates HAS2. Deubiquitinates RHEB in response to EGF signaling, promoting mTORC1 signaling. May regulate mRNA splicing through deubiquitination of the U4 spliceosomal protein PRPF3. This may prevent its recognition by the U5 component PRPF8 thereby destabilizing interactions within the U4/U6.U5 snRNP. May also play a role in the regulation of quality control in the ER. In Mus musculus (Mouse), this protein is Ubiquitin carboxyl-terminal hydrolase 4 (Usp4).